The following is a 140-amino-acid chain: MSLEIPPEWKKFRYRGKSLDELLNMPMDEFIKLLPSRQRRSLKKGFSDKQRRLLEKIRKYVREGKYSKTIKTHVRDMIILPEMVGLKFAVYNGKEFVEFQVVPEMIGHYLGEFSITTKKVEHGEPGLKATRSSLFLAMKG.

Belongs to the universal ribosomal protein uS19 family.

Functionally, protein S19 forms a complex with S13 that binds strongly to the 16S ribosomal RNA. This chain is Small ribosomal subunit protein uS19 (rps19), found in Sulfurisphaera tokodaii (strain DSM 16993 / JCM 10545 / NBRC 100140 / 7) (Sulfolobus tokodaii).